A 90-amino-acid polypeptide reads, in one-letter code: Conotoxin ba9a (90 aa).

The N-terminal stretch at 1–27 (MHLSLARSAGLMWLLLFAVGNFVGVQP) is a signal peptide. Positions 28 to 62 (GQITRDVDNGQLADNRRNLQSLRKPMTLFKSLNKR) are excised as a propeptide. A 4-carboxyglutamate modification is found at E67. 4-hydroxyproline is present on residues P76 and P80.

In terms of tissue distribution, expressed by the venom duct.

The protein resides in the secreted. The polypeptide is Conotoxin ba9a (Conus bayani (Bayan's cone)).